The primary structure comprises 84 residues: uncharacterized protein (84 aa).

Positions alanine 34–alanine 54 are enriched in low complexity. Positions alanine 34 to methionine 57 are disordered. An N-linked (GlcNAc...) asparagine glycan is attached at asparagine 45. The chain crosses the membrane as a helical span at residues tyrosine 66–glycine 83.

The protein localises to the endoplasmic reticulum membrane. This is an uncharacterized protein from Saccharomyces cerevisiae (strain ATCC 204508 / S288c) (Baker's yeast).